The sequence spans 110 residues: Large ribosomal subunit protein uL22 (110 aa).

Belongs to the universal ribosomal protein uL22 family. In terms of assembly, part of the 50S ribosomal subunit.

Functionally, this protein binds specifically to 23S rRNA; its binding is stimulated by other ribosomal proteins, e.g. L4, L17, and L20. It is important during the early stages of 50S assembly. It makes multiple contacts with different domains of the 23S rRNA in the assembled 50S subunit and ribosome. The globular domain of the protein is located near the polypeptide exit tunnel on the outside of the subunit, while an extended beta-hairpin is found that lines the wall of the exit tunnel in the center of the 70S ribosome. The sequence is that of Large ribosomal subunit protein uL22 from Acinetobacter baylyi (strain ATCC 33305 / BD413 / ADP1).